The chain runs to 431 residues: uncharacterized protein (431 aa).

The next 2 membrane-spanning stretches (helical) occupy residues 42 to 62 (LLIG…IGCL) and 74 to 94 (VMIF…ATML). Asn105 carries N-linked (GlcNAc...) asparagine; by host glycosylation. Transmembrane regions (helical) follow at residues 111–131 (LVLF…LFLI), 153–173 (AGVA…AAVP), 202–222 (MWFL…ELAY), 236–256 (VCTF…FRVL), and 279–299 (ATRT…IAFF).

Its subcellular location is the membrane. This is an uncharacterized protein from Homo sapiens (Human).